Here is a 344-residue protein sequence, read N- to C-terminus: tRNA N6-adenosine threonylcarbamoyltransferase (344 aa).

Fe cation is bound by residues His-112 and His-116. Residues 134–138, Asp-167, Gly-180, and Asn-280 each bind substrate; that span reads LASGG. Asp-308 is a Fe cation binding site.

The protein belongs to the KAE1 / TsaD family. Fe(2+) is required as a cofactor.

It localises to the cytoplasm. It catalyses the reaction L-threonylcarbamoyladenylate + adenosine(37) in tRNA = N(6)-L-threonylcarbamoyladenosine(37) in tRNA + AMP + H(+). In terms of biological role, required for the formation of a threonylcarbamoyl group on adenosine at position 37 (t(6)A37) in tRNAs that read codons beginning with adenine. Is involved in the transfer of the threonylcarbamoyl moiety of threonylcarbamoyl-AMP (TC-AMP) to the N6 group of A37, together with TsaE and TsaB. TsaD likely plays a direct catalytic role in this reaction. The protein is tRNA N6-adenosine threonylcarbamoyltransferase of Rickettsia massiliae (strain Mtu5).